The following is a 236-amino-acid chain: MQNVQQPKKRKLSDEIIAEDEDYQRDPEHPRNLIPEICRLLYSQEAMTGSGGAISMRRNDKIYVAPSGVQKERLQPEDMFVINDDGDTLKLPLNGKICRMSQCTPLFLTIYRLRGSECVIHSHSKRAVLATIISSGNEFRISDLQMIKGIYKRTENRNYRFGEEVVIPIIENTPTDPELQENLVKAMENYPDTCCVLIRRHGLYIWGTTWQQAKLMYECYEYLFDIAIQLKQLGMN.

The interval 1-29 (MQNVQQPKKRKLSDEIIAEDEDYQRDPEH) is disordered. Cys103 is a binding site for substrate. Zn(2+) contacts are provided by His121, His123, and His201.

This sequence belongs to the aldolase class II family. MtnB subfamily. Zn(2+) is required as a cofactor.

The protein localises to the cytoplasm. It catalyses the reaction 5-(methylsulfanyl)-D-ribulose 1-phosphate = 5-methylsulfanyl-2,3-dioxopentyl phosphate + H2O. It participates in amino-acid biosynthesis; L-methionine biosynthesis via salvage pathway; L-methionine from S-methyl-5-thio-alpha-D-ribose 1-phosphate: step 2/6. Catalyzes the dehydration of methylthioribulose-1-phosphate (MTRu-1-P) into 2,3-diketo-5-methylthiopentyl-1-phosphate (DK-MTP-1-P). The sequence is that of Probable methylthioribulose-1-phosphate dehydratase from Trichoplax adhaerens (Trichoplax reptans).